The following is a 354-amino-acid chain: MPEKLQLLLDRIKPASRSLSDAARAHLDDLTKPQGSLGRLEEIALKYVLATGNLSPLLSKKKICCFAADHGVAAEGVSAFPAEVTPQMVYNMLGGGAAINVLTRHAGVDLDVVDMGVNHDFPDLAGLVKRKVQPGSANMATGPAMSEEDALQALLCGAELAAEAQEAGYHLLGTGEMGIANTTPATALYAVLLDVSVESITGRGTGIDDERLLHKIAVIKQAIAVNGSRCTTPFATLAALGGYEIAAIAGFILGAAAARTPVVVDGFISSAGAVVALKLCPAVEDYLFFSHLSNEQGHRAVMEKLGARPILDLDLRLGEGTGAAIAMQLIEGAVKIYNEMATFSAARVSEKSGE.

Glu-319 (proton acceptor) is an active-site residue.

The protein belongs to the CobT family.

The catalysed reaction is 5,6-dimethylbenzimidazole + nicotinate beta-D-ribonucleotide = alpha-ribazole 5'-phosphate + nicotinate + H(+). It functions in the pathway nucleoside biosynthesis; alpha-ribazole biosynthesis; alpha-ribazole from 5,6-dimethylbenzimidazole: step 1/2. Its function is as follows. Catalyzes the synthesis of alpha-ribazole-5'-phosphate from nicotinate mononucleotide (NAMN) and 5,6-dimethylbenzimidazole (DMB). The chain is Nicotinate-nucleotide--dimethylbenzimidazole phosphoribosyltransferase from Pelodictyon phaeoclathratiforme (strain DSM 5477 / BU-1).